We begin with the raw amino-acid sequence, 97 residues long: Large ribosomal subunit protein eL21 (97 aa).

This sequence belongs to the eukaryotic ribosomal protein eL21 family.

The sequence is that of Large ribosomal subunit protein eL21 from Methanococcoides burtonii (strain DSM 6242 / NBRC 107633 / OCM 468 / ACE-M).